A 447-amino-acid polypeptide reads, in one-letter code: MNAWEVNFDGLVGLTHHYAGLSFGNEASTRHRFQVSNPRLAAKQGLLKMKTLADAGFPQAVIPPHERPFIPVLRQLGFSGSDEQVLEKVARQAPHWLSSVSSASPMWVANAATIAPSADTLDGKVHLTVANLNNKFHRSLEAPVTESLLKAIFNDEEKFSVHSALPQVALLGDEGAANHNRLGGHYGEPGMQLFVYGREEGNDTRPSRYPARQTREASEAVARLNQVNPQQVIFAQQNPDVIDQGVFHNDVIAVSNRQVLFCHQQAFARQVQLLANLRARVNGFMAIEVPATQVSVSDAVSTYLFNSQLLSRDDGSMMLVLPQECREHAGVWGYLNELLAADNPISELKVFDLRESMANGGGPACLRLRVVLTEEERQAVNPAVMMNDTLFNVLNDWVDRYYRDRLTAADLADPQLLREGREALDVLSQLLNLGSVYPFQREGGGNG.

Residues alanine 19 to serine 28, asparagine 110, and histidine 137 to arginine 138 each bind substrate. The active site involves glutamate 174. Arginine 212 provides a ligand contact to substrate. Histidine 248 is an active-site residue. Aspartate 250 and asparagine 359 together coordinate substrate. The active-site Nucleophile is cysteine 365.

This sequence belongs to the succinylarginine dihydrolase family. As to quaternary structure, homodimer.

The catalysed reaction is N(2)-succinyl-L-arginine + 2 H2O + 2 H(+) = N(2)-succinyl-L-ornithine + 2 NH4(+) + CO2. It functions in the pathway amino-acid degradation; L-arginine degradation via AST pathway; L-glutamate and succinate from L-arginine: step 2/5. Its function is as follows. Catalyzes the hydrolysis of N(2)-succinylarginine into N(2)-succinylornithine, ammonia and CO(2). The chain is N-succinylarginine dihydrolase from Escherichia coli O17:K52:H18 (strain UMN026 / ExPEC).